Consider the following 254-residue polypeptide: Proteasome subunit alpha type-7 (254 aa).

Residue Ser-136 is glycosylated (O-linked (GlcNAc) serine). The residue at position 159 (Tyr-159) is a Phosphotyrosine. The residue at position 233 (Lys-233) is an N6-acetyllysine.

Belongs to the peptidase T1A family. As to quaternary structure, the 26S proteasome consists of a 20S proteasome core and two 19S regulatory subunits. The 20S proteasome core is a barrel-shaped complex made of 28 subunits that are arranged in four stacked rings. The two outer rings are each formed by seven alpha subunits, and the two inner rings are formed by seven beta subunits. The proteolytic activity is exerted by three beta-subunits PSMB5, PSMB6 and PSMB7. PSMA7 interacts directly with the PSMG1-PSMG2 heterodimer which promotes 20S proteasome assembly. Interacts with HIF1A. Interacts with RAB7A. Interacts with PRKN. Interacts with ABL1 and ABL2. Interacts with EMAP2. Interacts with MAVS. As to expression, ubiquitous.

The protein resides in the cytoplasm. It localises to the nucleus. Its function is as follows. Component of the 20S core proteasome complex involved in the proteolytic degradation of most intracellular proteins. This complex plays numerous essential roles within the cell by associating with different regulatory particles. Associated with two 19S regulatory particles, forms the 26S proteasome and thus participates in the ATP-dependent degradation of ubiquitinated proteins. The 26S proteasome plays a key role in the maintenance of protein homeostasis by removing misfolded or damaged proteins that could impair cellular functions, and by removing proteins whose functions are no longer required. Associated with the PA200 or PA28, the 20S proteasome mediates ubiquitin-independent protein degradation. This type of proteolysis is required in several pathways including spermatogenesis (20S-PA200 complex) or generation of a subset of MHC class I-presented antigenic peptides (20S-PA28 complex). Inhibits the transactivation function of HIF-1A under both normoxic and hypoxia-mimicking conditions. The interaction with EMAP2 increases the proteasome-mediated HIF-1A degradation under the hypoxic conditions. Plays a role in hepatitis C virus internal ribosome entry site-mediated translation. Mediates nuclear translocation of the androgen receptor (AR) and thereby enhances androgen-mediated transactivation. Promotes MAVS degradation and thereby negatively regulates MAVS-mediated innate immune response. This Rattus norvegicus (Rat) protein is Proteasome subunit alpha type-7 (Psma7).